Here is a 621-residue protein sequence, read N- to C-terminus: KIF-binding protein (621 aa).

A disordered region spans residues 51–75 (GPAPEDEDERPEAEDGPGAGDHALG). Over residues 54–65 (PEDEDERPEAED) the composition is skewed to acidic residues. Serine 178 carries the phosphoserine modification.

This sequence belongs to the KIF-binding protein family. As to quaternary structure, interacts with KIF1B; positively regulates KIF1B microtubule motor activity. Interacts with STMN2. Highly expressed in heart, brain, ovary, testis, spinal cord and all specific brain regions examined. Moderate expressed at intermediate level in all other adult tissues examined, as well as in fetal liver and brain. Not expressed in blood leukocytes.

It is found in the cytoplasm. Its subcellular location is the cytoskeleton. Its function is as follows. Activator of KIF1B plus-end-directed microtubule motor activity. Required for organization of axonal microtubules, and axonal outgrowth and maintenance during peripheral and central nervous system development. This chain is KIF-binding protein, found in Homo sapiens (Human).